The following is a 399-amino-acid chain: Succinate--CoA ligase [ADP-forming] subunit beta (399 aa).

The 246-residue stretch at 9-254 (KELLAKYGVG…ETEEDPAEIE (246 aa)) folds into the ATP-grasp domain. ATP contacts are provided by residues Lys-46, 53 to 55 (GRG), Val-112, and Glu-117. Mg(2+) contacts are provided by Asn-209 and Asp-223. Residues Asn-274 and 331-333 (GIM) contribute to the substrate site.

This sequence belongs to the succinate/malate CoA ligase beta subunit family. In terms of assembly, heterotetramer of two alpha and two beta subunits. It depends on Mg(2+) as a cofactor.

The catalysed reaction is succinate + ATP + CoA = succinyl-CoA + ADP + phosphate. The enzyme catalyses GTP + succinate + CoA = succinyl-CoA + GDP + phosphate. The protein operates within carbohydrate metabolism; tricarboxylic acid cycle; succinate from succinyl-CoA (ligase route): step 1/1. Its function is as follows. Succinyl-CoA synthetase functions in the citric acid cycle (TCA), coupling the hydrolysis of succinyl-CoA to the synthesis of either ATP or GTP and thus represents the only step of substrate-level phosphorylation in the TCA. The beta subunit provides nucleotide specificity of the enzyme and binds the substrate succinate, while the binding sites for coenzyme A and phosphate are found in the alpha subunit. The protein is Succinate--CoA ligase [ADP-forming] subunit beta of Novosphingobium aromaticivorans (strain ATCC 700278 / DSM 12444 / CCUG 56034 / CIP 105152 / NBRC 16084 / F199).